The primary structure comprises 311 residues: Energy-coupling factor transporter ATP-binding protein EcfA2 (311 aa).

In terms of domain architecture, ABC transporter spans 3 to 265 (IKLKDVKFTF…IAFLEENNLQ (263 aa)). 40–47 (GQTGSGKT) contributes to the ATP binding site.

This sequence belongs to the ABC transporter superfamily. Energy-coupling factor EcfA family. As to quaternary structure, forms a stable energy-coupling factor (ECF) transporter complex composed of 2 membrane-embedded substrate-binding proteins (S component), 2 ATP-binding proteins (A component) and 2 transmembrane proteins (T component).

It is found in the cell membrane. Its function is as follows. ATP-binding (A) component of a common energy-coupling factor (ECF) ABC-transporter complex. Unlike classic ABC transporters this ECF transporter provides the energy necessary to transport a number of different substrates. The polypeptide is Energy-coupling factor transporter ATP-binding protein EcfA2 (Mycoplasmopsis synoviae (strain 53) (Mycoplasma synoviae)).